Here is a 378-residue protein sequence, read N- to C-terminus: MASSNRHWPSMFKSKPHPHQWQHDINSPLLPSASHRSSPFSSGCEVERSPEPKPRWNPKPEQIRILEAIFNSGMVNPPREEIRRIRAQLQEYGQVGDANVFYWFQNRKSRSKHKLRLLHNHSKHSLPQTQPQPQPQPSASSSSSSSSSSSKSTKPRKSKNKNNTNLSLGGSQMMGMFPPEPAFLFPVSTVGGFEGITVSSQLGFLSGDMIEQQKPAPTCTGLLLSEIMNGSVSYGTHHQQHLSEKEVEEMRMKMLQQPQTQICYATTNHQIASYNNNNNNNNIMLHIPPTTSTATTITTSHSLATVPSTSDQLQVQADARIRVFINEMELEVSSGPFNVRDAFGEEVVLINSAGQPIVTDEYGVALHPLQHGASYYLI.

Disordered regions lie at residues 1 to 60 (MASS…NPKP) and 123 to 173 (KHSL…GSQM). Residues 32-42 (SASHRSSPFSS) show a composition bias toward low complexity. Over residues 45–54 (EVERSPEPKP) the composition is skewed to basic and acidic residues. The segment at residues 51–115 (EPKPRWNPKP…NRKSRSKHKL (65 aa)) is a DNA-binding region (homeobox; WUS-type). 2 stretches are compositionally biased toward low complexity: residues 137-152 (PSAS…SSKS) and 161-171 (KNNTNLSLGGS).

The protein belongs to the WUS homeobox family. As to expression, expressed in the basal cell and later at the boundary between suspensor and proembryo. Expressed at low levels in proliferating tissues post embryonically. Detected in vegetative shoot apical meristem, leaf primordia, floral meristems, emerging floral organs, epidermal layer of the placenta and in the upper portion of the root meristematic zone.

The protein localises to the nucleus. It localises to the cytoplasm. Homeodomain transcription factor required for meristem growth and early development. Promotes cell proliferation and prevents premature differentiation in meristematic tissues during postembryonic development. Essential for maintaining tissue growth during embryogenesis. May act by repressing TSS to promote meristematic proliferation. Involved in the transcriptional activation of a subset of cytokinin response factors. May act as a negative regulator of cytokinin signaling in the dark. This is WUSCHEL-related homeobox 9 from Arabidopsis thaliana (Mouse-ear cress).